The chain runs to 47 residues: Large ribosomal subunit protein bL34 (47 aa).

The protein belongs to the bacterial ribosomal protein bL34 family.

This is Large ribosomal subunit protein bL34 from Nocardia farcinica (strain IFM 10152).